The following is a 264-amino-acid chain: Indole-3-glycerol phosphate synthase (264 aa).

This sequence belongs to the TrpC family.

The catalysed reaction is 1-(2-carboxyphenylamino)-1-deoxy-D-ribulose 5-phosphate + H(+) = (1S,2R)-1-C-(indol-3-yl)glycerol 3-phosphate + CO2 + H2O. Its pathway is amino-acid biosynthesis; L-tryptophan biosynthesis; L-tryptophan from chorismate: step 4/5. The polypeptide is Indole-3-glycerol phosphate synthase (Xylella fastidiosa (strain 9a5c)).